The sequence spans 543 residues: MFS-type transporter pyvG (543 aa).

A disordered region spans residues 24-71 (PPTEQQPGFQLPPPYRLAATRTQPQQQQEQEQEQEQAKPATRPPWNEP). Asn94 is a glycosylation site (N-linked (GlcNAc...) asparagine). 12 consecutive transmembrane segments (helical) span residues 101–121 (LLVYLEVNLITFMVYMSVAIF), 141–161 (LGMSLYVLGYGTGPMIWSPLS), 178–198 (IFLLLSIPTAVVNNVPGFLIL), 203–223 (GFFGSPGLATGGASIADVTGL), 230–250 (LYVWAVCSIAGPAVAPVIAGF), 259–279 (WSMWEVLWAAGGCFVFLLFLP), 335–355 (PAILFTTVYIGLVYAIFYSYF), 374–394 (GLIFLGAIVGTLLVLPGYFAF), 415–435 (LVPALCGSVLVPVGLFLFAWT), 440–460 (LHWVVPTVGLVLEVAGMSLVI), 476–496 (ASLFAINDLARAYLAFAAIMW), and 512–532 (LLAGLTVGCVGGMFTLYWWGP).

This sequence belongs to the major facilitator superfamily. CAR1 family.

Its subcellular location is the cell membrane. MFS-type transporter; part of the gene cluster that mediates the biosynthesis of pyranoviolin A, a pyranonigrin analog with a C-3 methoxy group. May be involved in the secretion of pyranoviolin A. The polypeptide is MFS-type transporter pyvG (Aspergillus violaceofuscus (strain CBS 115571)).